The sequence spans 467 residues: Spermatogenesis- and oogenesis-specific basic helix-loop-helix-containing protein 2 (467 aa).

A bHLH domain is found at 200 to 251; that stretch reads QASFLHSTKEKLRRERIKSCCEQLRTLLPYVKGRKSDVASVIEATVDYVKQV. Residues 443–453 are compositionally biased toward low complexity; that stretch reads ASASDHQASQP. Residues 443–467 are disordered; sequence ASASDHQASQPPALPSPQPHDSSYF.

As to quaternary structure, forms both hetero- and homodimers with SOHLH1. As to expression, preferentially expressed in the adult ovary and testis. Expressed in the majority of spermatogonia in adult animals, but not in the most undifferentiated spermatogonial population.

The protein localises to the nucleus. It localises to the cytoplasm. Transcription regulator of both male and female germline differentiation. Suppresses genes involved in spermatogonial stem cells maintenance, and induces genes important for spermatogonial differentiation. Coordinates oocyte differentiation without affecting meiosis I. The sequence is that of Spermatogenesis- and oogenesis-specific basic helix-loop-helix-containing protein 2 (Sohlh2) from Mus musculus (Mouse).